Reading from the N-terminus, the 1028-residue chain is Unconventional myosin-Ic (1028 aa).

Met1 carries the N-acetylmethionine modification. In terms of domain architecture, Myosin motor spans Gly12–Glu696. Residues Asn53, Tyr61, Ser104–Glu113, and Asn157–Ser161 each bind ATP. Lys348 is subject to N6-methyllysine. The interval Leu573 to Asp595 is actin-binding. IQ domains are found at residues Lys699 to Ala728 and Met722 to Thr751. Residues Lys850–Arg1024 form the TH1 domain.

It belongs to the TRAFAC class myosin-kinesin ATPase superfamily. Myosin family. Interacts (via its IQ motifs) with CALM.

It localises to the cytoplasm. Its subcellular location is the cell cortex. The protein resides in the cell projection. It is found in the ruffle membrane. The protein localises to the cytoplasmic vesicle. It localises to the stereocilium membrane. Functionally, myosins are actin-based motor molecules with ATPase activity. Unconventional myosins serve in intracellular movements. Their highly divergent tails are presumed to bind to membranous compartments, which would be moved relative to actin filaments. The polypeptide is Unconventional myosin-Ic (MYO1C) (Gallus gallus (Chicken)).